The chain runs to 297 residues: 4-hydroxy-tetrahydrodipicolinate synthase (297 aa).

Threonine 47 contacts pyruvate. Tyrosine 136 serves as the catalytic Proton donor/acceptor. Lysine 165 functions as the Schiff-base intermediate with substrate in the catalytic mechanism. Residue isoleucine 206 coordinates pyruvate.

This sequence belongs to the DapA family. In terms of assembly, homotetramer; dimer of dimers.

It localises to the cytoplasm. The catalysed reaction is L-aspartate 4-semialdehyde + pyruvate = (2S,4S)-4-hydroxy-2,3,4,5-tetrahydrodipicolinate + H2O + H(+). The protein operates within amino-acid biosynthesis; L-lysine biosynthesis via DAP pathway; (S)-tetrahydrodipicolinate from L-aspartate: step 3/4. Functionally, catalyzes the condensation of (S)-aspartate-beta-semialdehyde [(S)-ASA] and pyruvate to 4-hydroxy-tetrahydrodipicolinate (HTPA). The protein is 4-hydroxy-tetrahydrodipicolinate synthase of Campylobacter concisus (strain 13826).